The chain runs to 695 residues: MAP kinase phosphatase with leucine-rich repeats protein 2 (695 aa).

LRR repeat units lie at residues 101–122, 124–145, 147–167, 170–191, 193–214, 215–235, 239–260, 262–283, 286–307, and 309–330; these read SLKS…ITLL, NLNH…LSQL, SLET…NVCK, SLTS…FLNL, NLKD…LPNN, IEKL…SLIR, SLTT…LSCL, NVKT…VLGS, SLVT…VILL, and NLRI…IPTE. The span at 413 to 426 shows a compositional bias: low complexity; it reads SENNEINENNQLLT. Disordered regions lie at residues 413–438 and 492–519; these read SENN…KNDS and QEQL…QQQQ. The 140-residue stretch at 556-695 folds into the Tyrosine-protein phosphatase domain; the sequence is VPDLIIDKLY…LKKFEKDLFK (140 aa). Residue C639 is the Phosphocysteine intermediate of the active site.

Belongs to the protein-tyrosine phosphatase family. Non-receptor class dual specificity subfamily.

The catalysed reaction is O-phospho-L-tyrosyl-[protein] + H2O = L-tyrosyl-[protein] + phosphate. The enzyme catalyses O-phospho-L-seryl-[protein] + H2O = L-seryl-[protein] + phosphate. It carries out the reaction O-phospho-L-threonyl-[protein] + H2O = L-threonyl-[protein] + phosphate. Probable phosphatase with dual specificity toward Ser/Thr and Tyr-containing proteins. In Dictyostelium discoideum (Social amoeba), this protein is MAP kinase phosphatase with leucine-rich repeats protein 2 (mpl2).